Here is a 385-residue protein sequence, read N- to C-terminus: Succinate--CoA ligase [ADP-forming] subunit beta (385 aa).

The ATP-grasp domain occupies 9–244 (KEILRKYGVP…QDEEDPLETR (236 aa)). ATP is bound by residues Lys46, 53–55 (GRG), Glu99, Cys102, and Glu107. Residues Asn199 and Asp213 each coordinate Mg(2+). Residues Asn264 and 321–323 (GIM) each bind substrate.

Belongs to the succinate/malate CoA ligase beta subunit family. As to quaternary structure, heterotetramer of two alpha and two beta subunits. It depends on Mg(2+) as a cofactor.

The catalysed reaction is succinate + ATP + CoA = succinyl-CoA + ADP + phosphate. It catalyses the reaction GTP + succinate + CoA = succinyl-CoA + GDP + phosphate. The protein operates within carbohydrate metabolism; tricarboxylic acid cycle; succinate from succinyl-CoA (ligase route): step 1/1. Its function is as follows. Succinyl-CoA synthetase functions in the citric acid cycle (TCA), coupling the hydrolysis of succinyl-CoA to the synthesis of either ATP or GTP and thus represents the only step of substrate-level phosphorylation in the TCA. The beta subunit provides nucleotide specificity of the enzyme and binds the substrate succinate, while the binding sites for coenzyme A and phosphate are found in the alpha subunit. In Rickettsia bellii (strain RML369-C), this protein is Succinate--CoA ligase [ADP-forming] subunit beta.